The primary structure comprises 249 residues: Ubiquinone biosynthesis O-methyltransferase (249 aa).

S-adenosyl-L-methionine is bound by residues R41, G72, D93, and M136.

This sequence belongs to the methyltransferase superfamily. UbiG/COQ3 family.

It carries out the reaction a 3-demethylubiquinol + S-adenosyl-L-methionine = a ubiquinol + S-adenosyl-L-homocysteine + H(+). It catalyses the reaction a 3-(all-trans-polyprenyl)benzene-1,2-diol + S-adenosyl-L-methionine = a 2-methoxy-6-(all-trans-polyprenyl)phenol + S-adenosyl-L-homocysteine + H(+). Its pathway is cofactor biosynthesis; ubiquinone biosynthesis. Its function is as follows. O-methyltransferase that catalyzes the 2 O-methylation steps in the ubiquinone biosynthetic pathway. The chain is Ubiquinone biosynthesis O-methyltransferase from Mesorhizobium japonicum (strain LMG 29417 / CECT 9101 / MAFF 303099) (Mesorhizobium loti (strain MAFF 303099)).